Reading from the N-terminus, the 262-residue chain is Ribosomal RNA small subunit methyltransferase A (262 aa).

6 residues coordinate S-adenosyl-L-methionine: histidine 19, leucine 21, glycine 44, glutamate 65, aspartate 90, and asparagine 109. Positions 218 to 246 (LPNNLPGPLRERAEEALAGLGHGPDARAE) are disordered.

It belongs to the class I-like SAM-binding methyltransferase superfamily. rRNA adenine N(6)-methyltransferase family. RsmA subfamily.

Its subcellular location is the cytoplasm. It carries out the reaction adenosine(1518)/adenosine(1519) in 16S rRNA + 4 S-adenosyl-L-methionine = N(6)-dimethyladenosine(1518)/N(6)-dimethyladenosine(1519) in 16S rRNA + 4 S-adenosyl-L-homocysteine + 4 H(+). In terms of biological role, specifically dimethylates two adjacent adenosines (A1518 and A1519) in the loop of a conserved hairpin near the 3'-end of 16S rRNA in the 30S particle. May play a critical role in biogenesis of 30S subunits. In Rubrobacter xylanophilus (strain DSM 9941 / JCM 11954 / NBRC 16129 / PRD-1), this protein is Ribosomal RNA small subunit methyltransferase A.